Consider the following 339-residue polypeptide: NADH-quinone oxidoreductase subunit H (339 aa).

The next 8 membrane-spanning stretches (helical) occupy residues 7 to 27 (LFWITLKIMALVVPLMLAVAY), 77 to 97 (VLFVIAPLLAIMPALAAWAVI), 112 to 132 (LLYILAMTSLGVYGIIIAGWA), 149 to 169 (VVSYEIAMGFALVGVLMAAGS), 180 to 200 (AGGIFHWFWLPLLPLFLVYWI), 235 to 255 (VFFLAEYANMILISAVAAVMF), 276 to 296 (VPGVVWFMLKTAFFMFCYLWF), and 315 to 335 (VLIPVTVVWLIVLTIFIVTGF).

The protein belongs to the complex I subunit 1 family. As to quaternary structure, NDH-1 is composed of 14 different subunits. Subunits NuoA, H, J, K, L, M, N constitute the membrane sector of the complex.

The protein resides in the cell inner membrane. It catalyses the reaction a quinone + NADH + 5 H(+)(in) = a quinol + NAD(+) + 4 H(+)(out). NDH-1 shuttles electrons from NADH, via FMN and iron-sulfur (Fe-S) centers, to quinones in the respiratory chain. The immediate electron acceptor for the enzyme in this species is believed to be ubiquinone. Couples the redox reaction to proton translocation (for every two electrons transferred, four hydrogen ions are translocated across the cytoplasmic membrane), and thus conserves the redox energy in a proton gradient. This subunit may bind ubiquinone. The chain is NADH-quinone oxidoreductase subunit H from Alkalilimnicola ehrlichii (strain ATCC BAA-1101 / DSM 17681 / MLHE-1).